The primary structure comprises 213 residues: Nucleoside triphosphate pyrophosphatase (213 aa).

The Proton acceptor role is filled by aspartate 79.

It belongs to the Maf family. It depends on a divalent metal cation as a cofactor.

It is found in the cytoplasm. It catalyses the reaction a ribonucleoside 5'-triphosphate + H2O = a ribonucleoside 5'-phosphate + diphosphate + H(+). It carries out the reaction a 2'-deoxyribonucleoside 5'-triphosphate + H2O = a 2'-deoxyribonucleoside 5'-phosphate + diphosphate + H(+). Its function is as follows. Nucleoside triphosphate pyrophosphatase. May have a dual role in cell division arrest and in preventing the incorporation of modified nucleotides into cellular nucleic acids. The protein is Nucleoside triphosphate pyrophosphatase of Mycobacterium leprae (strain Br4923).